Consider the following 168-residue polypeptide: Peptide deformylase 1 (168 aa).

2 residues coordinate Fe cation: C92 and H134. The active site involves E135. H138 is a Fe cation binding site.

The protein belongs to the polypeptide deformylase family. Requires Fe(2+) as cofactor.

It catalyses the reaction N-terminal N-formyl-L-methionyl-[peptide] + H2O = N-terminal L-methionyl-[peptide] + formate. Its function is as follows. Removes the formyl group from the N-terminal Met of newly synthesized proteins. Requires at least a dipeptide for an efficient rate of reaction. N-terminal L-methionine is a prerequisite for activity but the enzyme has broad specificity at other positions. This Pseudomonas syringae pv. tomato (strain ATCC BAA-871 / DC3000) protein is Peptide deformylase 1.